We begin with the raw amino-acid sequence, 125 residues long: Kappa-casein (125 aa).

Positions 42 to 63 (LPNIDPPTVERRPRPRPSFIAI) are disordered. An O-linked (GalNAc...) threonine glycan is attached at Thr97. Phosphoserine; alternate is present on Ser104. Ser104 carries O-linked (GalNAc...) serine; alternate glycosylation. Thr121 carries an O-linked (GalNAc...) threonine glycan. A Phosphoserine modification is found at Ser122.

Belongs to the kappa-casein family. In terms of tissue distribution, mammary gland specific. Secreted in milk.

The protein localises to the secreted. Functionally, kappa-casein stabilizes micelle formation, preventing casein precipitation in milk. In Lama guanicoe (Guanaco), this protein is Kappa-casein (CSN3).